A 486-amino-acid polypeptide reads, in one-letter code: Adenylate kinase 8 (486 aa).

2 adenylate kinase regions span residues 58–258 and 269–471; these read PRII…NFIC and PRIL…SRLV. 67-72 is an ATP binding site; that stretch reads ASGKKT. Residues 87–112 form an NMP 1 region; it reads TFCDILKDDSDLTRAAQSYYDKKQNV. AMP is bound by residues 139 to 142 and Arg202; that span reads AIPK. The LID 1 stretch occupies residues 176-205; it reads GKRIDPVTGDVYHVTFMWPESEEVAQRLET. ATP is bound at residue 278–283; the sequence is GAGRNL. The NMP 2 stretch occupies residues 298–327; the sequence is CCGELLKAVSADESHMGELIKPYLESEQQV. AMP contacts are provided by residues 325–327 and 354–357; these read QQV and GFPR. Residues 391–424 are LID 2; that stretch reads LRAVDPVTGEWYHSVYKPPPGPEVQARLRFNPQH. Residue Arg392 participates in ATP binding. Arg432 contacts AMP.

This sequence belongs to the adenylate kinase family.

Its subcellular location is the cytoplasm. The protein resides in the cytosol. The catalysed reaction is AMP + ATP = 2 ADP. It catalyses the reaction a 2'-deoxyribonucleoside 5'-diphosphate + ATP = a 2'-deoxyribonucleoside 5'-triphosphate + ADP. It carries out the reaction a ribonucleoside 5'-diphosphate + ATP = a ribonucleoside 5'-triphosphate + ADP. Functionally, nucleoside monophosphate (NMP) kinase that catalyzes the reversible transfer of the terminal phosphate group between nucleoside triphosphates and monophosphates. Has highest activity toward AMP, and weaker activity toward dAMP, CMP and dCMP. Also displays broad nucleoside diphosphate kinase activity. The sequence is that of Adenylate kinase 8 (ak8) from Danio rerio (Zebrafish).